A 140-amino-acid chain; its full sequence is Mercuric transport protein MerC (140 aa).

The Cytoplasmic portion of the chain corresponds to 2-10 (GLMTRIADK). Residues 11–31 (TGALGSVVSAMGCAACFPALA) form a helical membrane-spanning segment. Residues Gly-22 and Ala-25 each contribute to the Hg(2+) site. The Periplasmic segment spans residues 32–46 (SFGAAIGLGFLSQYE). A helical transmembrane segment spans residues 47–67 (GLFISRLLPLFAALAFLANAL). Topologically, residues 68-78 (GWFSHRQWLRS) are cytoplasmic. A helical transmembrane segment spans residues 79–99 (LLGMIGPAIVFAATVWLLGNW). Over 100-106 (WTANLMY) the chain is Periplasmic. Residues 107 to 127 (VGLALMIGVSIWDFVSPAHRR) form a helical membrane-spanning segment. Over 128 to 140 (CGPDGCELPAKRL) the chain is Cytoplasmic.

It localises to the cell inner membrane. Its activity is regulated as follows. Uptake of Hg(2+) is decreased by iodoacetamide and iodoacetate, and is completely inhibited by the thiol-modifying reagent N-ethylmaleimide (NEM). Involved in mercuric ion uptake and binding. MerC-mediated Hg(2+) uptake does not require MerP. This Shigella flexneri protein is Mercuric transport protein MerC.